A 257-amino-acid polypeptide reads, in one-letter code: NAD-capped RNA hydrolase NudC (257 aa).

Residue Arg69 participates in substrate binding. Zn(2+) is bound by residues Cys98 and Cys101. Glu111 is a substrate binding site. Residues Cys116 and Cys119 each contribute to the Zn(2+) site. Tyr124 lines the substrate pocket. Positions Pro125–Thr248 constitute a Nudix hydrolase domain. A divalent metal cation contacts are provided by Ala158, Glu174, and Glu178. A Nudix box motif is present at residues Gly159–Gly180. Residue Gln192–Ser199 participates in substrate binding. Residue Glu219 participates in a divalent metal cation binding. Ala241 contacts substrate.

It belongs to the Nudix hydrolase family. NudC subfamily. In terms of assembly, homodimer. Mg(2+) is required as a cofactor. It depends on Mn(2+) as a cofactor. Requires Zn(2+) as cofactor.

The enzyme catalyses a 5'-end NAD(+)-phospho-ribonucleoside in mRNA + H2O = a 5'-end phospho-adenosine-phospho-ribonucleoside in mRNA + beta-nicotinamide D-ribonucleotide + 2 H(+). It carries out the reaction NAD(+) + H2O = beta-nicotinamide D-ribonucleotide + AMP + 2 H(+). The catalysed reaction is NADH + H2O = reduced beta-nicotinamide D-ribonucleotide + AMP + 2 H(+). Functionally, mRNA decapping enzyme that specifically removes the nicotinamide adenine dinucleotide (NAD) cap from a subset of mRNAs by hydrolyzing the diphosphate linkage to produce nicotinamide mononucleotide (NMN) and 5' monophosphate mRNA. The NAD-cap is present at the 5'-end of some mRNAs and stabilizes RNA against 5'-processing. Has preference for mRNAs with a 5'-end purine. Catalyzes the hydrolysis of a broad range of dinucleotide pyrophosphates. The protein is NAD-capped RNA hydrolase NudC of Salmonella choleraesuis (strain SC-B67).